A 312-amino-acid polypeptide reads, in one-letter code: F-box protein At1g11270 (312 aa).

The F-box domain maps to 29–80 (SVVKLLLPHDVVGLILERLPVESLLRFKCVSNQWKSTIESQCFQERQLIRRM).

This Arabidopsis thaliana (Mouse-ear cress) protein is F-box protein At1g11270.